Consider the following 338-residue polypeptide: TPR repeat-containing protein MJ0941 (338 aa).

8 TPR repeats span residues 27–62 (LEAV…EPDF), 63–96 (YLAL…ESKN), 97–130 (PITW…ENRF), 131–164 (LSAF…TPNF), 165–198 (VPMW…KPHD), 199–232 (KNAL…LNVK), 268–301 (VALW…QPHY), and 302–335 (IKAL…IHKD).

The protein is TPR repeat-containing protein MJ0941 of Methanocaldococcus jannaschii (strain ATCC 43067 / DSM 2661 / JAL-1 / JCM 10045 / NBRC 100440) (Methanococcus jannaschii).